Reading from the N-terminus, the 65-residue chain is Beta-defensin 17 (65 aa).

Positions Met-1 to Gly-19 are cleaved as a signal peptide. 3 cysteine pairs are disulfide-bonded: Cys-35-Cys-63, Cys-42-Cys-56, and Cys-46-Cys-64.

This sequence belongs to the beta-defensin family.

It localises to the secreted. Its function is as follows. Has antibacterial activity. The polypeptide is Beta-defensin 17 (Defb17) (Rattus norvegicus (Rat)).